We begin with the raw amino-acid sequence, 753 residues long: Ion-translocating oxidoreductase complex subunit C (753 aa).

4Fe-4S ferredoxin-type domains follow at residues 367-397 and 407-436; these read EMGEPQEEKGCIRCSACADACPADLLPQQLY and KATAHNLADCIECGACAWVCPSNIPLVQYF. Positions 377, 380, 383, 387, 416, 419, 422, and 426 each coordinate [4Fe-4S] cluster. Disordered stretches follow at residues 517–561, 606–625, 640–659, and 705–735; these read AKPD…RKAA, RKAEQQVAPVEAPVAEPVDP, and AKARKAEQQAAQPDLASAAANDDPRKAAVAA. The segment covering 526-537 has biased composition (basic and acidic residues); the sequence is AAREARKAEARA. Composition is skewed to low complexity over residues 610 to 622, 644 to 656, and 712 to 735; these read QQVAPVEAPVAEP and QQAAQPDLASAAANDDPRKAAVAA.

This sequence belongs to the 4Fe4S bacterial-type ferredoxin family. RnfC subfamily. As to quaternary structure, the complex is composed of six subunits: RnfA, RnfB, RnfC, RnfD, RnfE and RnfG. The cofactor is [4Fe-4S] cluster.

The protein localises to the cell inner membrane. In terms of biological role, part of a membrane-bound complex that couples electron transfer with translocation of ions across the membrane. The sequence is that of Ion-translocating oxidoreductase complex subunit C from Klebsiella pneumoniae (strain 342).